Consider the following 398-residue polypeptide: Dual-specificity RNA methyltransferase RlmN (398 aa).

Catalysis depends on E119, which acts as the Proton acceptor. The 240-residue stretch at E125 to D364 folds into the Radical SAM core domain. Cysteines 132 and 369 form a disulfide. Residues C139, C143, and C146 each contribute to the [4Fe-4S] cluster site. Residues G193–E194, S225, S247–H249, and N326 each bind S-adenosyl-L-methionine. The active-site S-methylcysteine intermediate is the C369.

Belongs to the radical SAM superfamily. RlmN family. Requires [4Fe-4S] cluster as cofactor.

It is found in the cytoplasm. The enzyme catalyses adenosine(2503) in 23S rRNA + 2 reduced [2Fe-2S]-[ferredoxin] + 2 S-adenosyl-L-methionine = 2-methyladenosine(2503) in 23S rRNA + 5'-deoxyadenosine + L-methionine + 2 oxidized [2Fe-2S]-[ferredoxin] + S-adenosyl-L-homocysteine. It carries out the reaction adenosine(37) in tRNA + 2 reduced [2Fe-2S]-[ferredoxin] + 2 S-adenosyl-L-methionine = 2-methyladenosine(37) in tRNA + 5'-deoxyadenosine + L-methionine + 2 oxidized [2Fe-2S]-[ferredoxin] + S-adenosyl-L-homocysteine. Functionally, specifically methylates position 2 of adenine 2503 in 23S rRNA and position 2 of adenine 37 in tRNAs. m2A2503 modification seems to play a crucial role in the proofreading step occurring at the peptidyl transferase center and thus would serve to optimize ribosomal fidelity. The chain is Dual-specificity RNA methyltransferase RlmN from Yersinia enterocolitica serotype O:8 / biotype 1B (strain NCTC 13174 / 8081).